Reading from the N-terminus, the 164-residue chain is MPEQLNTRVEDCFQLAESFFKRPFKRPVVSLKLRGQKAGVAHLHENLLRFNPQLYRENTEDFLKQTVAHEVAHLIAHQLFGERIQPHGEEWQLIMRGVYELPPNRCHTYDVKRRSVTRYIYRCPCAESDFPFSAQRHKLVAQGRRYLCRRCRQTLVYSGETRVE.

In terms of domain architecture, SprT-like spans glutamine 14 to valine 156. Histidine 69 lines the Zn(2+) pocket. Residue glutamate 70 is part of the active site. Residue histidine 73 participates in Zn(2+) binding.

It belongs to the SprT family. Zn(2+) serves as cofactor.

It is found in the cytoplasm. This Pseudomonas fluorescens (strain ATCC BAA-477 / NRRL B-23932 / Pf-5) protein is Protein SprT.